A 236-amino-acid polypeptide reads, in one-letter code: MSRSRITLLRTHCHECAYVSGRTARLEFLSPTLRLNDHRYQLLLEQGFRRSGPYVYRPHCPGCKACQSLRIPVARFRPRRRHRRCQRANANLHVTACPPVMTQEHLALYRRYIDHRHPRSSMANPDHAEAEGFLAAPWCTTVFYELRTEAQGSLLAVAVTDVLPDALSAVYTFYAPEAEHRGLGNLAVLWQLSEARRLGAQHLYLGYWIADAPAMAYKASFRPHEIFDGRGWRAQE.

Belongs to the R-transferase family. Bpt subfamily.

It localises to the cytoplasm. It catalyses the reaction N-terminal L-glutamyl-[protein] + L-leucyl-tRNA(Leu) = N-terminal L-leucyl-L-glutamyl-[protein] + tRNA(Leu) + H(+). The enzyme catalyses N-terminal L-aspartyl-[protein] + L-leucyl-tRNA(Leu) = N-terminal L-leucyl-L-aspartyl-[protein] + tRNA(Leu) + H(+). Functionally, functions in the N-end rule pathway of protein degradation where it conjugates Leu from its aminoacyl-tRNA to the N-termini of proteins containing an N-terminal aspartate or glutamate. This Halorhodospira halophila (strain DSM 244 / SL1) (Ectothiorhodospira halophila (strain DSM 244 / SL1)) protein is Aspartate/glutamate leucyltransferase.